The following is a 169-amino-acid chain: Large ribosomal subunit protein uL10 (169 aa).

The protein belongs to the universal ribosomal protein uL10 family. Part of the ribosomal stalk of the 50S ribosomal subunit. The N-terminus interacts with L11 and the large rRNA to form the base of the stalk. The C-terminus forms an elongated spine to which L12 dimers bind in a sequential fashion forming a multimeric L10(L12)X complex.

In terms of biological role, forms part of the ribosomal stalk, playing a central role in the interaction of the ribosome with GTP-bound translation factors. The chain is Large ribosomal subunit protein uL10 from Rickettsia rickettsii (strain Iowa).